The following is a 136-amino-acid chain: uncharacterized protein (136 aa).

The next 4 membrane-spanning stretches (helical) occupy residues 10–32 (SAGIAFFVFIISAIILPGFFIWI), 44–66 (LRCGMANFAAVVITAVVAFILHF), 70–89 (VLLLPLLAFLIYLYVLKTLL), and 102–124 (IAGVVIFLLAVILLLIFGVWLLF).

The protein localises to the cell membrane. This is an uncharacterized protein from Archaeoglobus fulgidus (strain ATCC 49558 / DSM 4304 / JCM 9628 / NBRC 100126 / VC-16).